Consider the following 432-residue polypeptide: Histidinol dehydrogenase (432 aa).

Positions 133, 194, and 217 each coordinate NAD(+). Residues S240, Q262, and H265 each coordinate substrate. Zn(2+) contacts are provided by Q262 and H265. Residues E330 and H331 each act as proton acceptor in the active site. The substrate site is built by H331, D364, E418, and H423. D364 serves as a coordination point for Zn(2+). Residue H423 coordinates Zn(2+).

It belongs to the histidinol dehydrogenase family. Zn(2+) serves as cofactor.

The catalysed reaction is L-histidinol + 2 NAD(+) + H2O = L-histidine + 2 NADH + 3 H(+). The protein operates within amino-acid biosynthesis; L-histidine biosynthesis; L-histidine from 5-phospho-alpha-D-ribose 1-diphosphate: step 9/9. In terms of biological role, catalyzes the sequential NAD-dependent oxidations of L-histidinol to L-histidinaldehyde and then to L-histidine. The polypeptide is Histidinol dehydrogenase (Nitrosomonas europaea (strain ATCC 19718 / CIP 103999 / KCTC 2705 / NBRC 14298)).